Consider the following 159-residue polypeptide: UPF0699 transmembrane protein YdbS (159 aa).

Transmembrane regions (helical) follow at residues 22 to 42 (IIIS…SYYF) and 47 to 67 (WISG…VFII).

Belongs to the UPF0699 family.

The protein resides in the cell membrane. This Bacillus subtilis (strain 168) protein is UPF0699 transmembrane protein YdbS (ydbS).